Reading from the N-terminus, the 312-residue chain is MANNMIACRKSFTDTLLELARQDKDIVAVTTDARGSVTLGDFAKELPAQFVECGIAEQDAVGISAGLAHSGKKVFVCGPACFYVARSLEQVKVDLAYSQNNVKILGVSGGVAYGALGATHHSLHDIAVLRTFPGMNIVLPCDARQTRKLVKLLVDYPEPVYVRVGRAAVPDVYENDDFEFVLGKANTLLDGTDLTIIAAGETVYHAYQAGLMLREKGIQARVLDMSSIKPVDVEAIRKAAEETGRIITVEEHSRFGGLGAIVVETLSENPVPVRIIGIPDENVVHGNSHEIFAHYGLDKEGICKTALEFVKK.

The protein belongs to the transketolase family. In terms of assembly, probable heterodimer composed of AptA and AptB. It depends on thiamine diphosphate as a cofactor.

The enzyme catalyses apulose 4-phosphate + D-glyceraldehyde 3-phosphate = D-xylulose 5-phosphate + dihydroxyacetone phosphate. The protein operates within carbohydrate metabolism. Functionally, involved in catabolism of D-apiose. Catalyzes the transfer of the glycolaldehyde group from apulose-4-phosphate to D-glyceraldehyde 3-phosphate, generating dihydroxyacetone phosphate and D-xylulose-5-phosphate. This chain is Apulose-4-phosphate transketolase subunit B, found in Phocaeicola vulgatus (strain ATCC 8482 / DSM 1447 / JCM 5826 / CCUG 4940 / NBRC 14291 / NCTC 11154) (Bacteroides vulgatus).